An 86-amino-acid chain; its full sequence is Serine protease inhibitor Kazal-type 4 (86 aa).

The N-terminal stretch at 1–26 (MAVRLWVVALALAALFIVDREVPVSA) is a signal peptide. The region spanning 31–86 (FSRMPICEHMTESPDCSRIYDPVCGTDGVTYESECKLCLARIENKQDIQIVKDGEC) is the Kazal-like domain. 3 disulfide bridges follow: C37/C68, C46/C65, and C54/C86.

Synthesized in duodenal goblet cells and in monocytes in bone marrow and blood.

Its subcellular location is the secreted. Inhibits the glucose-induced insulin secretion from perfused pancreas; also plays a role in the immune system. Does not inhibit trypsin. The polypeptide is Serine protease inhibitor Kazal-type 4 (SPINK4) (Sus scrofa (Pig)).